The chain runs to 510 residues: Probable allantoinase 2 (510 aa).

Zn(2+) contacts are provided by His97, His99, Lys185, His228, His287, and Asp360. Lys185 is modified (N6-carboxylysine).

The protein belongs to the metallo-dependent hydrolases superfamily. Allantoinase family. As to quaternary structure, homotetramer. Zn(2+) is required as a cofactor. In terms of processing, carboxylation allows a single lysine to coordinate two zinc ions.

It carries out the reaction (S)-allantoin + H2O = allantoate + H(+). The protein operates within nitrogen metabolism; (S)-allantoin degradation; allantoate from (S)-allantoin: step 1/1. In Dictyostelium discoideum (Social amoeba), this protein is Probable allantoinase 2 (allB2).